Reading from the N-terminus, the 63-residue chain is Large ribosomal subunit protein uL30 (63 aa).

It belongs to the universal ribosomal protein uL30 family. Part of the 50S ribosomal subunit.

The chain is Large ribosomal subunit protein uL30 from Rickettsia canadensis (strain McKiel).